A 144-amino-acid polypeptide reads, in one-letter code: Large ribosomal subunit protein uL15 (144 aa).

The segment at Met1–Arg60 is disordered. Gly residues predominate over residues Arg21–Ala31.

The protein belongs to the universal ribosomal protein uL15 family. As to quaternary structure, part of the 50S ribosomal subunit.

In terms of biological role, binds to the 23S rRNA. This chain is Large ribosomal subunit protein uL15, found in Alkalilimnicola ehrlichii (strain ATCC BAA-1101 / DSM 17681 / MLHE-1).